A 280-amino-acid polypeptide reads, in one-letter code: Probable endonuclease 4 (280 aa).

Zn(2+) contacts are provided by His-69, His-109, Glu-145, Asp-179, His-182, His-216, Asp-229, His-231, and Glu-261.

Belongs to the AP endonuclease 2 family. It depends on Zn(2+) as a cofactor.

The catalysed reaction is Endonucleolytic cleavage to 5'-phosphooligonucleotide end-products.. Functionally, endonuclease IV plays a role in DNA repair. It cleaves phosphodiester bonds at apurinic or apyrimidinic (AP) sites, generating a 3'-hydroxyl group and a 5'-terminal sugar phosphate. This is Probable endonuclease 4 from Actinobacillus pleuropneumoniae serotype 5b (strain L20).